The sequence spans 576 residues: MKSQTQAPLVVEGKLSDSERMKKESNFLRGTISDDLQNGLTGGFEGDNFLLIRFHGMYQQDDRDIRAERAQQLLEPRHAMMLRCRLPGGVITPKQWLSIDKFASENTLYGSIRITNRQTFQFHGILKGHVKPAHQMLASTGLDALATANDVNRNVLCTSNPEQSSLHQEAYEWAKKLSEHLLPRTHAYAEIWLDKEKVATTDEEPILGETYLPRKFKTSVVIPPYNDVDLHANDMNFIAIAENGHLVGFNVLVGGGLAMTHGDKKTFPRLASEFGYIPIDKTLAVAEAIVTTQRDWGNRTERKNAKTKYTLERVGIETFKQEVERRSGVMFDMIRPYQFTHRGDQIGWLKGVDNKWYLTLFIESGRLIDKPNAPLKTGVAEIAKVHLGDFRLTANQNLIVAGVPEAQKEQIEAIARQYGLINDEVTPLRKHAMACVSFPTCPLAMAEAERFLPAFTDTLDNIMAKYGVSDEHIVVRVTGCPNGCGRAMLAEVGLVGKAPDRYNLHLGGNRMGTRIPRMYRENISSQEIIEILDTLIGQWAISRELNEGFGDFLIRTDVIKPVVNSAIDFYEVQEVI.

[4Fe-4S] cluster is bound by residues cysteine 435, cysteine 441, cysteine 480, and cysteine 484. Cysteine 484 is a binding site for siroheme.

It belongs to the nitrite and sulfite reductase 4Fe-4S domain family. Alpha(8)-beta(8). The alpha component is a flavoprotein, the beta component is a hemoprotein. Siroheme serves as cofactor. The cofactor is [4Fe-4S] cluster.

The enzyme catalyses hydrogen sulfide + 3 NADP(+) + 3 H2O = sulfite + 3 NADPH + 4 H(+). It functions in the pathway sulfur metabolism; hydrogen sulfide biosynthesis; hydrogen sulfide from sulfite (NADPH route): step 1/1. Component of the sulfite reductase complex that catalyzes the 6-electron reduction of sulfite to sulfide. This is one of several activities required for the biosynthesis of L-cysteine from sulfate. The sequence is that of Sulfite reductase [NADPH] hemoprotein beta-component from Proteus mirabilis (strain HI4320).